A 1930-amino-acid polypeptide reads, in one-letter code: Myosin-16 (1930 aa).

A Myosin N-terminal SH3-like domain is found at 35–84; the sequence is DIKKSCWVKDEKEGFIAGEIQSEQGDQVTVKTVNNQTVTVKKDDVQQMNP. The 687-residue stretch at 88-774 folds into the Myosin motor domain; it reads YQASDMADMT…ILAKLEDMRD (687 aa). 181–188 is an ATP binding site; the sequence is GESGAGKT. Actin-binding stretches follow at residues 652–674 and 753–767; these read LNKL…VPNE and KIGH…GILA. One can recognise an IQ domain in the interval 777–806; the sequence is LAKIMTMLQCRLRGFLMRIEFKKMLERRIG. Positions 835–1921 form a coiled coil; that stretch reads LLNVARQEEE…ALNKLRTRHR (1087 aa). The disordered stretch occupies residues 1116–1137; that stretch reads EELEAERSMRAKVEKQRSDLSR. A compositionally biased stretch (basic and acidic residues) spans 1120 to 1137; the sequence is AERSMRAKVEKQRSDLSR.

Belongs to the TRAFAC class myosin-kinesin ATPase superfamily. Myosin family.

It is found in the cytoplasm. The protein localises to the myofibril. Its function is as follows. May play a role in masticatory muscles contraction. The polypeptide is Myosin-16 (Canis lupus familiaris (Dog)).